Consider the following 176-residue polypeptide: Peptide methionine sulfoxide reductase MsrA (176 aa).

C10 is an active-site residue.

The protein belongs to the MsrA Met sulfoxide reductase family.

It catalyses the reaction L-methionyl-[protein] + [thioredoxin]-disulfide + H2O = L-methionyl-(S)-S-oxide-[protein] + [thioredoxin]-dithiol. It carries out the reaction [thioredoxin]-disulfide + L-methionine + H2O = L-methionine (S)-S-oxide + [thioredoxin]-dithiol. Functionally, has an important function as a repair enzyme for proteins that have been inactivated by oxidation. Catalyzes the reversible oxidation-reduction of methionine sulfoxide in proteins to methionine. This Sulfolobus acidocaldarius (strain ATCC 33909 / DSM 639 / JCM 8929 / NBRC 15157 / NCIMB 11770) protein is Peptide methionine sulfoxide reductase MsrA.